The following is a 778-amino-acid chain: MMNYRTSIYVVLSLVIFLNVQRSFVAESSAKRKVHIVYLGEKQHDDPEFVTESHHRMLWSLLGSKEDANDSMVYSYRHGFSGFAAKLTESQAKKIADLPDVVHVIPDSFYKLATTRTWDYLGLSAANPKSLLHETNMGEQIIIGVIDTGVWPESEVFNDSGFGPVPSHWKGGCETGENFNSSNCNKKLIGAKYFINGFLAENESFNSTNSLDFISPRDLDGHGTHVSTIAGGSFVPNISYKGLAGGTVRGGAPRAHIAMYKACWYLDDDDTTTCSSADILKAMDEAMHDGVDVLSISLGSSVPLYGETDIRDGITTGAFHAVLKGITVVCSGGNSGPDSLTVTNTAPWIITVAATTLDRSFATPLTLGNNKVILGQAMYTGPGLGFTSLVYPENPGNSNESFSGTCEELLFNSNRTMEGKVVLCFTTSPYGGAVLSAARYVKRAGGLGVIIARHPGYAIQPCLDDFPCVAVDWELGTDILLYTRSSGSPVVKIQPSKTLVGQPVGTKVATFSSRGPNSIAPAILKPDIAAPGVSILAATTNTTFSDQGFIMLSGTSMAAPAISGVAALLKALHRDWSPAAIRSAIVTTAWKTDPFGEQIFAEGSPPKLADPFDYGGGLVNPEKSANPGLVYDMGLEDYVLYMCSVGYNETSISQLIGKTTVCSNPKPSVLDFNLPSITIPNLKDEVTITRTVTNVGPLNSVYRVTVEPPLGFQVTVTPETLVFNSTTKKVYFKVKVSTTHKTNTGYYFGSLTWSDSLHNVTIPLSVRTQILQNYYDEN.

A signal peptide spans 1-22 (MMNYRTSIYVVLSLVIFLNVQR). The propeptide at 23–113 (SFVAESSAKR…VIPDSFYKLA (91 aa)) is activation peptide. An Inhibitor I9 domain is found at 34–113 (VHIVYLGEKQ…VIPDSFYKLA (80 aa)). N-linked (GlcNAc...) asparagine glycosylation occurs at N69. Residues 117-625 (TWDYLGLSAA…GGLVNPEKSA (509 aa)) form the Peptidase S8 domain. The active-site Charge relay system is D147. N-linked (GlcNAc...) asparagine glycosylation is found at N158, N180, N202, and N206. H222 acts as the Charge relay system in catalysis. N-linked (GlcNAc...) asparagine glycans are attached at residues N237, N399, N414, and N541. One can recognise a PA domain in the interval 388-483 (SLVYPENPGN…ELGTDILLYT (96 aa)). The Charge relay system role is filled by S556. N648, N724, and N759 each carry an N-linked (GlcNAc...) asparagine glycan.

The protein belongs to the peptidase S8 family.

The protein localises to the secreted. This is Subtilisin-like protease SBT3.6 from Arabidopsis thaliana (Mouse-ear cress).